Here is a 313-residue protein sequence, read N- to C-terminus: Iron-sulfur protein required for NADH dehydrogenase, mitochondrial (313 aa).

The transit peptide at 1–22 directs the protein to the mitochondrion; it reads MATVALLRSLRRRELHAAHISA. 51 to 58 provides a ligand contact to ATP; sequence GKGGVGKS.

This sequence belongs to the Mrp/NBP35 ATP-binding proteins family. The cofactor is [4Fe-4S] cluster.

It is found in the mitochondrion matrix. Essential during early vegetative growth. Required for the assembly of the mitochondrial membrane respiratory chain NADH dehydrogenase (Complex I). Involved in mitochondrial translation activity. May deliver of one or more Fe-S clusters to complex I subunits. The polypeptide is Iron-sulfur protein required for NADH dehydrogenase, mitochondrial (Arabidopsis thaliana (Mouse-ear cress)).